We begin with the raw amino-acid sequence, 300 residues long: Ornithine carbamoyltransferase (300 aa).

Carbamoyl phosphate contacts are provided by residues 51–54, Gln78, Arg102, and 129–132; these read STRT and HPCQ. Residues Asn160, Asp217, and 221–222 contribute to the L-ornithine site; that span reads SM. Carbamoyl phosphate is bound by residues 257–258 and Arg285; that span reads CL.

The protein belongs to the aspartate/ornithine carbamoyltransferase superfamily. OTCase family.

It localises to the cytoplasm. The enzyme catalyses carbamoyl phosphate + L-ornithine = L-citrulline + phosphate + H(+). It functions in the pathway amino-acid biosynthesis; L-arginine biosynthesis; L-arginine from L-ornithine and carbamoyl phosphate: step 1/3. Its function is as follows. Reversibly catalyzes the transfer of the carbamoyl group from carbamoyl phosphate (CP) to the N(epsilon) atom of ornithine (ORN) to produce L-citrulline. The polypeptide is Ornithine carbamoyltransferase (Halorhodospira halophila (strain DSM 244 / SL1) (Ectothiorhodospira halophila (strain DSM 244 / SL1))).